A 329-amino-acid polypeptide reads, in one-letter code: Malate dehydrogenase (329 aa).

NAD(+) is bound at residue 12-18 (GAAGQIG). Substrate-binding residues include R93 and R99. NAD(+) contacts are provided by residues N106, Q113, and 130 to 132 (VGN). Residues N132 and R166 each coordinate substrate. Residue H191 is the Proton acceptor of the active site.

It belongs to the LDH/MDH superfamily. MDH type 2 family.

It catalyses the reaction (S)-malate + NAD(+) = oxaloacetate + NADH + H(+). Catalyzes the reversible oxidation of malate to oxaloacetate. The sequence is that of Malate dehydrogenase from Aromatoleum aromaticum (strain DSM 19018 / LMG 30748 / EbN1) (Azoarcus sp. (strain EbN1)).